We begin with the raw amino-acid sequence, 314 residues long: tRNA dimethylallyltransferase (314 aa).

12–19 (GPTAAGKS) is a binding site for ATP. 14–19 (TAAGKS) provides a ligand contact to substrate. Interaction with substrate tRNA regions lie at residues 37–40 (DSAT), 161–165 (QRIQR), and 245–250 (RCVGYR).

The protein belongs to the IPP transferase family. Monomer. Mg(2+) serves as cofactor.

The catalysed reaction is adenosine(37) in tRNA + dimethylallyl diphosphate = N(6)-dimethylallyladenosine(37) in tRNA + diphosphate. In terms of biological role, catalyzes the transfer of a dimethylallyl group onto the adenine at position 37 in tRNAs that read codons beginning with uridine, leading to the formation of N6-(dimethylallyl)adenosine (i(6)A). This is tRNA dimethylallyltransferase from Bordetella petrii (strain ATCC BAA-461 / DSM 12804 / CCUG 43448).